The following is a 274-amino-acid chain: MSRPILVFDSGIGGLSVLAEIRKSLPHSDYCYLFDNARLPYGELEEQVLIAGCVALVCDLVARTNAMIVVVACNTASTVVLPALRANLSIPVVGVVPAIKPAAQMSKSKRIGLLATPGTVKRHYTHELISQFADDCHVELFGCSELVMMAEQKIATGEMDMHRLADLLAPVVAAQLDVLVLGCTHFPMIQAELQQVLGAGVTLMDSGAAIAKRVVTLLTQQNLIVEQRRVTNEREAVGQSAMQAFYTKAEISEGLTTTLIDCGFSTIERITTTN.

Residues 9–10 and 41–42 each bind substrate; these read DS and YG. Cys-73 (proton donor/acceptor) is an active-site residue. 74-75 is a binding site for substrate; sequence NT. Cys-183 functions as the Proton donor/acceptor in the catalytic mechanism. 184–185 contacts substrate; the sequence is TH.

This sequence belongs to the aspartate/glutamate racemases family.

It catalyses the reaction L-glutamate = D-glutamate. It participates in cell wall biogenesis; peptidoglycan biosynthesis. Functionally, provides the (R)-glutamate required for cell wall biosynthesis. In Shewanella baltica (strain OS185), this protein is Glutamate racemase.